Reading from the N-terminus, the 116-residue chain is uncharacterized protein (116 aa).

The Extracellular portion of the chain corresponds to 1–46; that stretch reads MGDNTTVAPGTNQTLVEEDLGAQITHTLMVQIMSKLNEMLTEYQPQ. N-linked (GlcNAc...) asparagine; by host glycosylation is found at N4 and N12. A helical membrane pass occupies residues 47-67; that stretch reads IIGIGATVLAIFVIMFISLLI. The Cytoplasmic segment spans residues 68-116; the sequence is ILGCNCIRPYNFKNLKRYITGKASKSVEYQPLKMSAVNMGMDEDDEFLA.

Its subcellular location is the host membrane. This is an uncharacterized protein from Magallana gigas (Pacific oyster).